The sequence spans 584 residues: Eukaryotic translation initiation factor 3 subunit D (584 aa).

The tract at residues 118-184 is disordered; the sequence is IFTRGRGQRG…KDYDKPQRNR (67 aa). Over residues 127 to 167 the composition is skewed to gly residues; the sequence is GRGGQDTRGGGRQQFQRGGRGGQQYGGGGYSDRGGGRGGGA. A compositionally biased stretch (basic and acidic residues) spans 173–184; that stretch reads GWKDYDKPQRNR. The segment at 312–326 is RNA gate; the sequence is ALDMVTVNENAADAP. The tract at residues 563-584 is disordered; it reads PANGLDDDDEGPEPEGVAEEED. Acidic residues predominate over residues 567-584; the sequence is LDDDDEGPEPEGVAEEED.

Belongs to the eIF-3 subunit D family. As to quaternary structure, component of the eukaryotic translation initiation factor 3 (eIF-3) complex.

Its subcellular location is the cytoplasm. In terms of biological role, mRNA cap-binding component of the eukaryotic translation initiation factor 3 (eIF-3) complex, which is involved in protein synthesis of a specialized repertoire of mRNAs and, together with other initiation factors, stimulates binding of mRNA and methionyl-tRNAi to the 40S ribosome. The eIF-3 complex specifically targets and initiates translation of a subset of mRNAs involved in cell proliferation. In the eIF-3 complex, eif3d specifically recognizes and binds the 7-methylguanosine cap of a subset of mRNAs. This chain is Eukaryotic translation initiation factor 3 subunit D, found in Chaetomium globosum (strain ATCC 6205 / CBS 148.51 / DSM 1962 / NBRC 6347 / NRRL 1970) (Soil fungus).